The following is a 545-amino-acid chain: Cytochrome P450 10 (545 aa).

Cysteine 493 contacts heme.

It belongs to the cytochrome P450 family. Heme serves as cofactor. Abundantly expressed in the female gonadotropic hormone producing dorsal bodies.

Functionally, may be involved in the synthesis of the female gonadotropic hormone produced by the dorsal bodies. This Lymnaea stagnalis (Great pond snail) protein is Cytochrome P450 10 (CYP10).